The primary structure comprises 389 residues: Chaperone protein DnaJ (389 aa).

The J domain maps to 5-79 (KRDYYEVLGI…RKLYDQFGHE (75 aa)). The CR-type zinc finger occupies 151–234 (GCNKTIKYER…CRSNKYTVTN (84 aa)). 8 residues coordinate Zn(2+): C164, C167, C182, C185, C208, C211, C222, and C225. CXXCXGXG motif repeat units lie at residues 164–171 (CHSCNGFG), 182–189 (CKDCNGNG), 208–215 (CSTCNGQG), and 222–229 (CKTCRSNK).

Belongs to the DnaJ family. Homodimer. It depends on Zn(2+) as a cofactor.

It is found in the cytoplasm. Participates actively in the response to hyperosmotic and heat shock by preventing the aggregation of stress-denatured proteins and by disaggregating proteins, also in an autonomous, DnaK-independent fashion. Unfolded proteins bind initially to DnaJ; upon interaction with the DnaJ-bound protein, DnaK hydrolyzes its bound ATP, resulting in the formation of a stable complex. GrpE releases ADP from DnaK; ATP binding to DnaK triggers the release of the substrate protein, thus completing the reaction cycle. Several rounds of ATP-dependent interactions between DnaJ, DnaK and GrpE are required for fully efficient folding. Also involved, together with DnaK and GrpE, in the DNA replication of plasmids through activation of initiation proteins. This Mycoplasma genitalium (strain ATCC 33530 / DSM 19775 / NCTC 10195 / G37) (Mycoplasmoides genitalium) protein is Chaperone protein DnaJ.